Here is a 390-residue protein sequence, read N- to C-terminus: MRYITAGESHGPQLTTILEGIPAGLPLVADDINAELARRQKGYGRGRRMQIEKDQVQIVSGVRHGQTIGAPIALIVENKDFAHWTKIMGAAPLTEQEKKEMKRQITRPRPGHADLNGAIKYGHRDMRNVLERSSARETTVRVAAGAVAKKVLAELGIKVAGHVIEIGGVRAEQTTYETIEQLQEITEASPVRCLDGEAGKKMMQAIDDAKASGDSIGGIVEVIVEGMPIGVGSYVHYDRKLDAKLAAAVMSINAFKGVEIGIGFEAAHRPGSQVHDEILWNEEEGYTRRTNHAGGLEGGMTTGMPVVVRGVMKPIPTLYKPLQSVDIETKESFSASIERSDSCAVPAASVVAEAVVAWELATALVEQFGADRMDCIRENIERHNEYAREF.

Residues arginine 39 and arginine 45 each contribute to the NADP(+) site. Residues 132–134 (RSS), 253–254 (NA), glycine 298, 313–317 (KPIPT), and arginine 339 each bind FMN.

The protein belongs to the chorismate synthase family. In terms of assembly, homotetramer. It depends on FMNH2 as a cofactor.

The catalysed reaction is 5-O-(1-carboxyvinyl)-3-phosphoshikimate = chorismate + phosphate. It functions in the pathway metabolic intermediate biosynthesis; chorismate biosynthesis; chorismate from D-erythrose 4-phosphate and phosphoenolpyruvate: step 7/7. Catalyzes the anti-1,4-elimination of the C-3 phosphate and the C-6 proR hydrogen from 5-enolpyruvylshikimate-3-phosphate (EPSP) to yield chorismate, which is the branch point compound that serves as the starting substrate for the three terminal pathways of aromatic amino acid biosynthesis. This reaction introduces a second double bond into the aromatic ring system. In Bacillus cytotoxicus (strain DSM 22905 / CIP 110041 / 391-98 / NVH 391-98), this protein is Chorismate synthase.